We begin with the raw amino-acid sequence, 481 residues long: 3-isopropylmalate dehydratase large subunit (481 aa).

The [4Fe-4S] cluster site is built by C363, C423, and C426. The disordered stretch occupies residues 437–463; it reads GQRAASTSNRNFEGRQGRGGRTHLVSP.

This sequence belongs to the aconitase/IPM isomerase family. LeuC type 1 subfamily. As to quaternary structure, heterodimer of LeuC and LeuD. The cofactor is [4Fe-4S] cluster.

The catalysed reaction is (2R,3S)-3-isopropylmalate = (2S)-2-isopropylmalate. It functions in the pathway amino-acid biosynthesis; L-leucine biosynthesis; L-leucine from 3-methyl-2-oxobutanoate: step 2/4. In terms of biological role, catalyzes the isomerization between 2-isopropylmalate and 3-isopropylmalate, via the formation of 2-isopropylmaleate. The sequence is that of 3-isopropylmalate dehydratase large subunit from Salinispora arenicola (strain CNS-205).